We begin with the raw amino-acid sequence, 333 residues long: tRNA(Ile)-lysidine synthase (333 aa).

Ser25–Ser30 contributes to the ATP binding site.

This sequence belongs to the tRNA(Ile)-lysidine synthase family.

The protein resides in the cytoplasm. It catalyses the reaction cytidine(34) in tRNA(Ile2) + L-lysine + ATP = lysidine(34) in tRNA(Ile2) + AMP + diphosphate + H(+). Its function is as follows. Ligates lysine onto the cytidine present at position 34 of the AUA codon-specific tRNA(Ile) that contains the anticodon CAU, in an ATP-dependent manner. Cytidine is converted to lysidine, thus changing the amino acid specificity of the tRNA from methionine to isoleucine. This chain is tRNA(Ile)-lysidine synthase, found in Ureaplasma parvum serovar 3 (strain ATCC 700970).